A 515-amino-acid chain; its full sequence is Vacuolar fusion protein CCZ1 homolog A (515 aa).

Belongs to the CCZ1 family. As to quaternary structure, interacts with MON1.

Its subcellular location is the endosome. The protein localises to the prevacuolar compartment. Functionally, plays an important role in membrane trafficking through the secretory apparatus. In complex with MON1, acts as a guanine exchange factor (GEF) for RABG3F of the Rab7 protein family. Promotes the exchange of GDP to GTP, converting RABG3F from an inactive GDP-bound form into an active GTP-bound form. The RABG3F active form is involved in protein trafficking from prevacuolar compartments (PVCs) to vacuoles. May serve as a linker between Rab5 and Rab7 protein families in PVCs and mediate PVC maturation. The chain is Vacuolar fusion protein CCZ1 homolog A from Arabidopsis thaliana (Mouse-ear cress).